The sequence spans 105 residues: Small ribosomal subunit protein uS10 (105 aa).

The protein belongs to the universal ribosomal protein uS10 family. As to quaternary structure, part of the 30S ribosomal subunit.

In terms of biological role, involved in the binding of tRNA to the ribosomes. The polypeptide is Small ribosomal subunit protein uS10 (Solidesulfovibrio magneticus (strain ATCC 700980 / DSM 13731 / RS-1) (Desulfovibrio magneticus)).